Here is a 341-residue protein sequence, read N- to C-terminus: Phosphate acyltransferase (341 aa).

This sequence belongs to the PlsX family. Homodimer. Probably interacts with PlsY.

The protein localises to the cytoplasm. It catalyses the reaction a fatty acyl-[ACP] + phosphate = an acyl phosphate + holo-[ACP]. The protein operates within lipid metabolism; phospholipid metabolism. Its function is as follows. Catalyzes the reversible formation of acyl-phosphate (acyl-PO(4)) from acyl-[acyl-carrier-protein] (acyl-ACP). This enzyme utilizes acyl-ACP as fatty acyl donor, but not acyl-CoA. The polypeptide is Phosphate acyltransferase (Vibrio vulnificus (strain CMCP6)).